Consider the following 840-residue polypeptide: MNKDYQIFWPSPSDPVRFEVDTSHEKVESISESDTMNVSNLSQGIMLSDSPICMETTSTTCDLPQNEIKNFERENEYESTLCEDAYGTLDNLLNDNNIENYSKNVLTQPVDTISISSLRQFDTVCKFHCVEAFDDEMTEKPEFQSQVYNYAKDNNIKQDSFREENPMETSVSASTDQLGNEYFRQPPPRSPPLIHCSGETLKFPEKSLAKSTAKESALNPSQPPSFVCKTAVPSKEIQNYGEIPEMSVSYAKEVTAEGVERPEIVSTWSSAGISWRSKASQENCEMPDMEQSAESLQPVQEDMALNEILKKLKHTNRKQEARIQELQCSNLYLEKRVKELQMKTTKQQVFIDVIDKLKENVEELIEEKYKIILEKNDTKKTLQNLQEILANTQKHLQESRNDKEMLQLQFKKIKANYVRLQERYMTEMQQKNKSVSQYLEMDKTLSKKEEEVKRLQQLRKEQEKVTASALDLLKREKETQEQEFLSLQEEFQKRDKANLEERQKLKSRLEKLLTQVKNLQFMSENERAKNIKLQQQINEVKNENKKLKQHVARSEEQNYVPKSETAQLKEQLEEVMKSDITKDTKMTHSNLLLDCSPCEEESLNPADIERSSQLASKMHSLLALMVGLLKCQDITNSDAEHFKESEKVSDIMLQRLKSLHLKKKNLDKELLKHKDRITTFRDLIAKEKAFQDHAIKVTDCDSDEAKSIRDVPTFLGAKLDKYHSLNEELDFLITKLGCLLESKESHCNRLIEENDKYQRHLGSLIKKVTSYEEIIECADQRLAISHSQIAHLEKRNKHLEDLIRKPREKARKPRSKSLENHPKSMTMMPAVFKENRNDLD.

Residues 303 to 559 adopt a coiled-coil conformation; it reads MALNEILKKL…HVARSEEQNY (257 aa). The segment at 800-840 is disordered; the sequence is EDLIRKPREKARKPRSKSLENHPKSMTMMPAVFKENRNDLD. Over residues 806–815 the composition is skewed to basic residues; that stretch reads PREKARKPRS.

The sequence is that of Cancer-associated gene 1 protein homolog (CAGE1) from Macaca fascicularis (Crab-eating macaque).